The primary structure comprises 347 residues: Toluene-4-sulfonate monooxygenase system iron-sulfur subunit TsaM1 (347 aa).

In terms of domain architecture, Rieske spans 7–109; that stretch reads WYVAAWDTEI…VVERNRLVWI (103 aa). [2Fe-2S] cluster is bound by residues cysteine 48, histidine 50, cysteine 67, and histidine 70.

As to quaternary structure, homotetramer. Part of the p-toluenesulfonate methyl-monooxygenase complex TsaBM, comprising the reductase TsaB and the oxygenase TsaM. [2Fe-2S] cluster is required as a cofactor.

The catalysed reaction is toluene-4-sulfonate + NADH + O2 + H(+) = 4-(hydroxymethyl)benzenesulfonate + NAD(+) + H2O. In terms of biological role, involved in the toluene-4-sulfonate degradation pathway. Does not discriminate between the sulfonate and the carboxyl substituents and can also be involved in the p-toluenecarboxylate degradation pathway. Can use toluene-4-sulfonate, p-toluate, m-toluate and 4-ethylbenzoate as substrates, but not p-xylene, toluene and p-cresol. Also catalyzes the demethylation of 4-methoxybenzoate to 4-hydroxybenzoate. The sequence is that of Toluene-4-sulfonate monooxygenase system iron-sulfur subunit TsaM1 (tsaM1) from Comamonas testosteroni (Pseudomonas testosteroni).